The sequence spans 133 residues: UPF0344 protein SH1980 (133 aa).

A run of 4 helical transmembrane segments spans residues 1 to 21, 42 to 62, 71 to 91, and 103 to 123; these read MLHMHIASWALTIILYVIAFL, VFMLLTLFSGFWLLIQEFMAA, MLLTLKMLCGIAVVALMEVSI, and LFWATIILIIITMSLGIILPW.

It belongs to the UPF0344 family.

The protein resides in the cell membrane. The protein is UPF0344 protein SH1980 of Staphylococcus haemolyticus (strain JCSC1435).